Here is a 248-residue protein sequence, read N- to C-terminus: Protein PIMREG (248 aa).

Residues 1–10 (MASRWQNMGT) are compositionally biased toward polar residues. A disordered region spans residues 1 to 32 (MASRWQNMGTSVRRRSLQHQEQLEDSKELQPV). Phosphoserine occurs at positions 11 and 16. Short sequence motifs (D-box) lie at residues 14-17 (RRSL) and 53-56 (RLPL). The disordered stretch occupies residues 117 to 205 (KARRRKRGAQ…PSESDSDLEP (89 aa)). Phosphoserine is present on S129. S131 is modified (phosphoserine; by UHMK1; in vitro). Composition is skewed to polar residues over residues 132 to 143 (PTHSLSQKSTRL) and 186 to 198 (PYSS…SPSE). Residues S199 and S201 each carry the phosphoserine modification.

Isoform 1 and isoform 2 interact with PICALM; this interaction may target PICALM to the nucleus. During mitosis, associates with HDAC2 and MTA2 subunits of the chromatin-remodeling NuRD complex; this association is strongest at prometaphase and decreases as the cell progresses through metaphase and anaphase. Ubiquitinated by the anaphase-promoting complex/cyclosome (APC/C) complex in the presence of FZR1, leading to its degradation by the proteasome during mitotic exit. However, degradation is not essential for normal mitotic progression within a single cell cycle. Expressed in thymus (at protein level). Detected in spleen, colon, ovary and small intestines.

It is found in the nucleus. The protein localises to the nucleolus. Its function is as follows. During mitosis, may play a role in the control of metaphase-to-anaphase transition. The protein is Protein PIMREG of Homo sapiens (Human).